Here is a 197-residue protein sequence, read N- to C-terminus: MFNSIRNFLGFNEPEEYEEYYEGEIDNNDYHALYPAEMPTPLPEESAPAPRRLPENPTVASNFAMNSNTTPTRNNVIGLPGVSNSPAEVVVCEPHSFEEMPQIIQALRDRRSIVLNLNMMDPDEAQRAVDFVAGGTFAIDGHQERIGDSIFLFTPNCVQVTNSLSREETPATPAAPARPAAPAPAWSDEMTPMAQAQ.

Disordered stretches follow at residues 38–72 (MPTP…TTPT) and 164–197 (LSRE…AQAQ). Polar residues predominate over residues 58 to 72 (TVASNFAMNSNTTPT). The segment covering 170–185 (PATPAAPARPAAPAPA) has biased composition (low complexity).

This sequence belongs to the SepF family. In terms of assembly, homodimer. Interacts with FtsZ.

The protein resides in the cytoplasm. In terms of biological role, cell division protein that is part of the divisome complex and is recruited early to the Z-ring. Probably stimulates Z-ring formation, perhaps through the cross-linking of FtsZ protofilaments. Its function overlaps with FtsA. The protein is Cell division protein SepF of Picosynechococcus sp. (strain ATCC 27264 / PCC 7002 / PR-6) (Agmenellum quadruplicatum).